We begin with the raw amino-acid sequence, 168 residues long: UPF0262 protein BBta_0898 (168 aa).

Belongs to the UPF0262 family.

The chain is UPF0262 protein BBta_0898 from Bradyrhizobium sp. (strain BTAi1 / ATCC BAA-1182).